We begin with the raw amino-acid sequence, 132 residues long: Small ribosomal subunit protein uS12 (132 aa).

Aspartate 89 bears the 3-methylthioaspartic acid mark. A disordered region spans residues 101 to 132 (TLDASGAAGPSSTNKATRNRKRSKYGVKRPKA). The segment covering 117–132 (TRNRKRSKYGVKRPKA) has biased composition (basic residues).

It belongs to the universal ribosomal protein uS12 family. In terms of assembly, part of the 30S ribosomal subunit. Contacts proteins S8 and S17. May interact with IF1 in the 30S initiation complex.

In terms of biological role, with S4 and S5 plays an important role in translational accuracy. Functionally, interacts with and stabilizes bases of the 16S rRNA that are involved in tRNA selection in the A site and with the mRNA backbone. Located at the interface of the 30S and 50S subunits, it traverses the body of the 30S subunit contacting proteins on the other side and probably holding the rRNA structure together. The combined cluster of proteins S8, S12 and S17 appears to hold together the shoulder and platform of the 30S subunit. The protein is Small ribosomal subunit protein uS12 of Sorangium cellulosum (strain So ce56) (Polyangium cellulosum (strain So ce56)).